We begin with the raw amino-acid sequence, 834 residues long: Protein kintoun (834 aa).

Disordered stretches follow at residues 214-239 (TAEE…KQEP), 374-415 (SRED…SVAP), 547-669 (KGKV…STGR), and 759-834 (KKNQ…EMDD). Ser378 is subject to Phosphoserine. The segment covering 389–398 (PVEEDPDGEL) has biased composition (acidic residues). Over residues 552-571 (AKKDNAPLDVKFERNQEGHA) the composition is skewed to basic and acidic residues. A compositionally biased stretch (acidic residues) spans 582 to 596 (EEEEDKENQDQEPES). Low complexity predominate over residues 597 to 607 (DQQQQQQVQNK). Composition is skewed to basic residues over residues 608 to 619 (KPGKKQRKKNKK) and 759 to 773 (KKNQ…RAQQ). Phosphoserine is present on Ser777. The span at 785 to 798 (EETRGSALKQEENP) shows a compositional bias: basic and acidic residues.

It belongs to the PIH1 family. Kintoun subfamily. As to quaternary structure, interacts with Pp1alpha-96A, Pp1-87B, Pp1-13C and flw.

The protein localises to the cytoplasm. Functionally, required for cytoplasmic pre-assembly of axonemal dyneins, thereby playing a central role in motility in cilia and flagella. Involved in pre-assembly of dynein arm complexes in the cytoplasm before intraflagellar transport loads them for the ciliary compartment. This is Protein kintoun from Drosophila melanogaster (Fruit fly).